A 207-amino-acid polypeptide reads, in one-letter code: LexA repressor (207 aa).

Residues 28–48 (VREIGEAVGLASSSTVHGHLA) constitute a DNA-binding region (H-T-H motif). Catalysis depends on for autocatalytic cleavage activity residues serine 129 and lysine 167.

This sequence belongs to the peptidase S24 family. In terms of assembly, homodimer.

It catalyses the reaction Hydrolysis of Ala-|-Gly bond in repressor LexA.. In terms of biological role, represses a number of genes involved in the response to DNA damage (SOS response), including recA and lexA. In the presence of single-stranded DNA, RecA interacts with LexA causing an autocatalytic cleavage which disrupts the DNA-binding part of LexA, leading to derepression of the SOS regulon and eventually DNA repair. In Geobacillus kaustophilus (strain HTA426), this protein is LexA repressor.